The sequence spans 126 residues: MSWSDIINNNLIGSGNVSKAAILGFDGAVWAKSDNFNISVEEAVAAGKAFTSLDALLGTGLRLEGQKFLVLNADNDRIIGKQGGSGFFIYKTIQAVIISIYEKGLQPEMCSKTTGALADYFRSIKY.

It belongs to the profilin family. In terms of assembly, occurs in many kinds of cells as a complex with monomeric actin in a 1:1 ratio. In embryos, expression is specifically detected in body wall muscle cells. In adults, expression is localized to a striking dot-like fashion in body wall muscle.

Its subcellular location is the cytoplasm. It localises to the cytoskeleton. Its function is as follows. Binds to actin and affects the structure of the cytoskeleton. At high concentrations, profilin prevents the polymerization of actin, whereas it enhances it at low concentrations. By binding to PIP2, it inhibits the formation of IP3 and DG. Also binds to poly(L-proline) and phosphatidylinositol 4,5-bisphosphate micelles. This is Profilin-3 (pfn-3) from Caenorhabditis elegans.